The following is a 688-amino-acid chain: Soluble guanylate cyclase gcy-35 (688 aa).

His-105 contacts heme. Residues 358–401 (LNQSRMSQVELNRTLEETTKKLKKMAQELEIEKQKTDELLCELM) adopt a coiled-coil conformation. Positions 424–552 (TLLFTDIVTF…DTVNVANKME (129 aa)) constitute a Guanylate cyclase domain. Asp-429 and Asp-473 together coordinate Mg(2+). The disordered stretch occupies residues 644–688 (VENGNSAQNNHNNNNNTHHSGRKLMNGSSVDPGSHHIRSPTCTIS). Low complexity predominate over residues 646–659 (NGNSAQNNHNNNNN).

This sequence belongs to the adenylyl cyclase class-4/guanylyl cyclase family. Heterodimer; heterodimerizes with gcy-36, and possibly with other soluble guanylate cyclases. It depends on heme as a cofactor. Expressed in URX, AQR and PQR neurons. Also expressed in ALN, SDQ and BDU neurons, and variably in AVM, PLM and PLN neurons, pharyngeal and body wall muscles, and the excretory cell.

The protein localises to the cytoplasm. It is found in the cell projection. It localises to the dendrite. It catalyses the reaction GTP = 3',5'-cyclic GMP + diphosphate. Regulated by molecular oxygen, which binds to the heme binding site. Probably not activated by nitric oxide (NO). Functionally, plays a central role in social feeding behavior and oxygen sensation by synthesizing 3',5'-cyclic guanosine monophosphate (cGMP) from GTP. Oxygen, which binds to its heme-binding sites, probably regulates social behavior by modulating its activity. cGMP is a common second messenger in sensory transduction and is implicated in oxygen sensation. Indeed, C.elegans exhibits a strong behavioral preference for 5-12% oxygen, avoiding higher and lower oxygen levels; a higher level of oxygen inducing a naturally polymorphic social feeding behavior. Involved in avoidance of hyperoxia and for oxygen-induced aggregation and bordering, probably by mediating oxygen-sensing in URX, AQR and PQR sensory neurons. This Caenorhabditis elegans protein is Soluble guanylate cyclase gcy-35 (gcy-35).